A 320-amino-acid polypeptide reads, in one-letter code: Malate dehydrogenase (320 aa).

Residues 10-15 (GAGNIG) and D34 each bind NAD(+). Substrate-binding residues include R83 and R89. Residues N96 and 119–121 (ITN) contribute to the NAD(+) site. Substrate contacts are provided by N121 and R152. H176 functions as the Proton acceptor in the catalytic mechanism.

It belongs to the LDH/MDH superfamily. MDH type 3 family.

The catalysed reaction is (S)-malate + NAD(+) = oxaloacetate + NADH + H(+). Catalyzes the reversible oxidation of malate to oxaloacetate. The protein is Malate dehydrogenase of Novosphingobium aromaticivorans (strain ATCC 700278 / DSM 12444 / CCUG 56034 / CIP 105152 / NBRC 16084 / F199).